Consider the following 363-residue polypeptide: uncharacterized protein (363 aa).

4 helical membrane-spanning segments follow: residues 34 to 54 (YVYD…IILW), 60 to 80 (LALF…TLLV), 91 to 111 (EIAD…TAAG), and 112 to 132 (LMFS…PLFL). The segment covering 232–245 (SSTTTHSTDSEQIL) has biased composition (polar residues). The disordered stretch occupies residues 232 to 363 (SSTTTHSTDS…SSQKKKPSRK (132 aa)). 2 stretches are compositionally biased toward low complexity: residues 246–268 (TSVS…TPPN) and 275–285 (DSNSSDSSSSS). The segment covering 322–342 (SRSERNAQHHRNKDQEQRQDS) has biased composition (basic and acidic residues).

Belongs to the chlamydial CPn_0443/CT_005/TC_0273 family.

Its subcellular location is the cell membrane. This is an uncharacterized protein from Chlamydia trachomatis serovar D (strain ATCC VR-885 / DSM 19411 / UW-3/Cx).